The sequence spans 256 residues: Exosome complex component RRP41-like (256 aa).

The protein belongs to the RNase PH family. Probable component of the RNA exosome complex. In terms of tissue distribution, highly expressed in imbibed seeds and young seedlings.

The protein resides in the cytoplasm. The protein localises to the nucleus. In terms of biological role, non-catalytic component of the RNA exosome complex which has 3'-&gt;5' exoribonuclease activity and participates in a multitude of cellular RNA processing, maturation and degradation events. In vitro, is a processive phosphorolytic exonuclease and requires a single-stranded poly(A) tail on the substrate RNA for its activity. Plays an important role in seed germination and early seedling growth by mediating specific cytoplasmic mRNA decay of transcripts coding for the abscisic acid (ABA) biosynthetic enzymes NCED5 and NCED6, and the ABA signaling transcription factors ABI3 and ABI4. This Arabidopsis thaliana (Mouse-ear cress) protein is Exosome complex component RRP41-like.